The sequence spans 1003 residues: DNA topoisomerase 3-alpha (1003 aa).

One can recognise a Toprim domain in the interval 35 to 179 (KVLCVAEKND…NLRVLRARFS (145 aa)). The Topo IA-type catalytic domain occupies 197 to 617 (DQRVSDAVDV…QQVQKYKQVF (421 aa)). Tyr-362 serves as the catalytic O-(5'-phospho-DNA)-tyrosine intermediate. The interval 400 to 426 (GGPTPRNGSKSDQAHPPIHPTKYTSGL) is disordered. The C4-type zinc finger occupies 658 to 685 (CPQCNKDMVLKTKKSGGFYLSCMGFPEC). Residues Cys-815, Cys-817, Cys-840, and Cys-845 each contribute to the Zn(2+) site. The GRF-type 1 zinc finger occupies 815 to 854 (CNCGREAVLLTVRKQGPNQGRHFYKCSNGDCNFFLWADSS). Residues 856 to 888 (STGGGTPTSASGPPGSSVGCPSSVGSHMDGFGS) form a disordered region. Over residues 862–888 (PTSASGPPGSSVGCPSSVGSHMDGFGS) the composition is skewed to low complexity. Positions 899, 901, 924, and 932 each coordinate Zn(2+). The segment at 899 to 941 (CLCGQPAVTRTVQKDGPNKGRQFHTCAKPREQQCGFFQWVDEN) adopts a GRF-type 2 zinc-finger fold. The tract at residues 946 to 991 (SFAAPAWPGGRGKAQRPEAASKRPRAGSSDAGSTVKKPRKCSLCHQ) is disordered.

This sequence belongs to the type IA topoisomerase family. As to quaternary structure, binds ssDNA. Interacts (via N-terminal region) with BLM; the interaction is direct. Directly interacts with RMI1. Component of the RMI complex, containing at least TOP3A, RMI1 and RMI2. The RMI complex interacts with BLM. It depends on Mg(2+) as a cofactor. As to expression, highly expressed in testis.

Its subcellular location is the mitochondrion matrix. It carries out the reaction ATP-independent breakage of single-stranded DNA, followed by passage and rejoining.. In terms of biological role, releases the supercoiling and torsional tension of DNA introduced during the DNA replication and transcription by transiently cleaving and rejoining one strand of the DNA duplex. Introduces a single-strand break via transesterification at a target site in duplex DNA. The scissile phosphodiester is attacked by the catalytic tyrosine of the enzyme, resulting in the formation of a DNA-(5'-phosphotyrosyl)-enzyme intermediate and the expulsion of a 3'-OH DNA strand. The free DNA strand then undergoes passage around the unbroken strand thus removing DNA supercoils. Finally, in the religation step, the DNA 3'-OH attacks the covalent intermediate to expel the active-site tyrosine and restore the DNA phosphodiester backbone. As an essential component of the RMI complex it is involved in chromosome separation and the processing of homologous recombination intermediates to limit DNA crossover formation in cells. Has DNA decatenation activity. It is required for mtDNA decatenation and segregation after completion of replication, in a process that does not require BLM, RMI1 and RMI2. This is DNA topoisomerase 3-alpha (Top3a) from Mus musculus (Mouse).